A 466-amino-acid chain; its full sequence is Argininosuccinate lyase 1 (466 aa).

It belongs to the lyase 1 family. Argininosuccinate lyase subfamily.

It is found in the cytoplasm. It carries out the reaction 2-(N(omega)-L-arginino)succinate = fumarate + L-arginine. Its pathway is amino-acid biosynthesis; L-arginine biosynthesis; L-arginine from L-ornithine and carbamoyl phosphate: step 3/3. The polypeptide is Argininosuccinate lyase 1 (Mesorhizobium japonicum (strain LMG 29417 / CECT 9101 / MAFF 303099) (Mesorhizobium loti (strain MAFF 303099))).